We begin with the raw amino-acid sequence, 407 residues long: Phosphopentomutase (407 aa).

Aspartate 10, aspartate 306, histidine 311, aspartate 347, histidine 348, and histidine 359 together coordinate Mn(2+).

Belongs to the phosphopentomutase family. Mn(2+) is required as a cofactor.

It localises to the cytoplasm. It catalyses the reaction 2-deoxy-alpha-D-ribose 1-phosphate = 2-deoxy-D-ribose 5-phosphate. It carries out the reaction alpha-D-ribose 1-phosphate = D-ribose 5-phosphate. It functions in the pathway carbohydrate degradation; 2-deoxy-D-ribose 1-phosphate degradation; D-glyceraldehyde 3-phosphate and acetaldehyde from 2-deoxy-alpha-D-ribose 1-phosphate: step 1/2. In terms of biological role, isomerase that catalyzes the conversion of deoxy-ribose 1-phosphate (dRib-1-P) and ribose 1-phosphate (Rib-1-P) to deoxy-ribose 5-phosphate (dRib-5-P) and ribose 5-phosphate (Rib-5-P), respectively. This chain is Phosphopentomutase, found in Salmonella paratyphi A (strain AKU_12601).